We begin with the raw amino-acid sequence, 66 residues long: Ocellatin-PT4 (66 aa).

The first 22 residues, 1–22, serve as a signal peptide directing secretion; that stretch reads MAFLKKSLFLVLFLGLVSLSIC. A propeptide spanning residues 23-39 is cleaved from the precursor; the sequence is DEEKRQDEDDDDDDDEE. Valine 66 is subject to Valine amide.

Expressed by the skin glands.

The protein localises to the secreted. In terms of biological role, has antibacterial activity against Gram-negative bacteria E.coli ATCC 25922 (MIC=80 uM), K.pneumoniae ATCC 700603 (MIC=310 uM) and S.choleraesuis ATCC 14028 (MIC=310 uM). Shows no hemolytic activity and no cytotoxicity. This chain is Ocellatin-PT4, found in Leptodactylus pustulatus (Ceara white-lipped frog).